The sequence spans 118 residues: Large ribosomal subunit protein bL17 (118 aa).

This sequence belongs to the bacterial ribosomal protein bL17 family. Part of the 50S ribosomal subunit. Contacts protein L32.

The sequence is that of Large ribosomal subunit protein bL17 from Thermus thermophilus (strain ATCC BAA-163 / DSM 7039 / HB27).